Consider the following 207-residue polypeptide: ATP-dependent dethiobiotin synthetase BioD (207 aa).

Position 11–16 (11–16 (DVGKTF)) interacts with ATP. Thr15 lines the Mg(2+) pocket. Residue Lys31 is part of the active site. Ser35 serves as a coordination point for substrate. Residues Asp42, 95-98 (ETSG), and 155-156 (NQ) each bind ATP. Mg(2+)-binding residues include Asp42 and Glu95.

It belongs to the dethiobiotin synthetase family. Homodimer. Mg(2+) is required as a cofactor.

It is found in the cytoplasm. It catalyses the reaction (7R,8S)-7,8-diammoniononanoate + CO2 + ATP = (4R,5S)-dethiobiotin + ADP + phosphate + 3 H(+). The protein operates within cofactor biosynthesis; biotin biosynthesis; biotin from 7,8-diaminononanoate: step 1/2. In terms of biological role, catalyzes a mechanistically unusual reaction, the ATP-dependent insertion of CO2 between the N7 and N8 nitrogen atoms of 7,8-diaminopelargonic acid (DAPA, also called 7,8-diammoniononanoate) to form a ureido ring. This is ATP-dependent dethiobiotin synthetase BioD from Chlamydia abortus (strain DSM 27085 / S26/3) (Chlamydophila abortus).